We begin with the raw amino-acid sequence, 338 residues long: Solute carrier family 35 member G5 (338 aa).

The interval 1–21 is disordered; the sequence is MAGSHPYFNLPDSTHPSPPSA. 9 consecutive transmembrane segments (helical) span residues 37–57, 67–87, 105–125, 160–180, 190–210, 221–241, 250–270, 281–301, and 305–325; these read TNGLLVALLGGGLPAGFVGPL, LPSLELLICRCLFHLPIALPL, CFCALLNVLSIGCAYSAVQVV, CGLLGSILGLIIIVGPGLWTL, ALGYVQAFLGGLALSLGLLVY, TVAFLSGLVGLLGSVPGLFVL, LLSWSCVGAVGILALVSFTCV, LVCAVLHSEVVVALILQYYVL, and VAPSDIMGAGIVLGSIAIITA. In terms of domain architecture, EamA 1 spans 49–174; it reads LPAGFVGPLS…SILGLIIIVG (126 aa). In terms of domain architecture, EamA 2 spans 272–325; it reads YAVTKAHPALVCAVLHSEVVVALILQYYVLHETVAPSDIMGAGIVLGSIAIITA.

The protein belongs to the SLC35G solute transporter family.

The protein localises to the membrane. The chain is Solute carrier family 35 member G5 (SLC35G5) from Pan troglodytes (Chimpanzee).